The chain runs to 400 residues: MQELEMAGQGSLRLSRKSDTIVVLEKDLSTEQMVLSMGPQHPSTHGVLRLECLTDGEVVTEAEPYLGYLHRCFEKHCEHVDYPAIVPYTDRMDYLAGINSEMAYCVAVEKLLDLEIPRRVEFIRVIVSELNRIASHLVAIGTYAIDLGAFTPFLFCFRDREHILNMLEWATGARMLYNYIWVGGLAYDVPAGFNERVLEFVNYFRPKALELQQLLTENEIFVKRTKGIGIMPADVAINYGWSGPMLRGSGVQWDIRRNDPYSIYPELDFAVPVPDGKLSVVGDCLSRHLVRALEIEESLKIIEQCIDKMPGTQGFDPRSAVPKRVRPKAGEVYGRAENPRGELGFYIQSDGKSTSPLRCKARSSCFVNLSAMKDLSRGQLIPDLVAIIGSLDIVLGEVDR.

Belongs to the complex I 49 kDa subunit family. NDH-1 is composed of 14 different subunits. Subunits NuoB, C, D, E, F, and G constitute the peripheral sector of the complex.

Its subcellular location is the cell inner membrane. The enzyme catalyses a quinone + NADH + 5 H(+)(in) = a quinol + NAD(+) + 4 H(+)(out). Functionally, NDH-1 shuttles electrons from NADH, via FMN and iron-sulfur (Fe-S) centers, to quinones in the respiratory chain. The immediate electron acceptor for the enzyme in this species is believed to be a menaquinone. Couples the redox reaction to proton translocation (for every two electrons transferred, four hydrogen ions are translocated across the cytoplasmic membrane), and thus conserves the redox energy in a proton gradient. The sequence is that of NADH-quinone oxidoreductase subunit D from Chlorobium phaeovibrioides (strain DSM 265 / 1930) (Prosthecochloris vibrioformis (strain DSM 265)).